The following is a 698-amino-acid chain: Superoxide-generating NADPH oxidase heavy chain subunit B (698 aa).

Disordered regions lie at residues 1 to 68 and 134 to 158; these read MNEK…NITP and NDQVNSNTDNNNNTNNNNNTNNNKN. Residues 1 to 184 lie on the Cytoplasmic side of the membrane; the sequence is MNEKKELQQE…KIRGWWWHRG (184 aa). Composition is skewed to polar residues over residues 16 to 25 and 33 to 53; these read FQTPKNQQLE and EISSTGNETSESGISSPPISQ. Composition is skewed to low complexity over residues 54-65 and 138-156; these read NDNSNNENESLN and NSNTDNNNNTNNNNNTNNN. A helical membrane pass occupies residues 185-205; the sequence is ISTYIMLFYIALNIGVGVHMF. Over 206–229 the chain is Extracellular; that stretch reads YNMYHSDIFKFLGLSFCFSRTAAR. One can recognise a Ferric oxidoreductase domain in the interval 225–375; it reads RTAARLINLN…LFIPFYILLC (151 aa). Residues 230–250 traverse the membrane as a helical segment; it reads LINLNSAVILLPVLRNFLSWL. Residues 251-269 are Cytoplasmic-facing; the sequence is RGTIVNNYIPIDKHLNFHK. H268 and H282 together coordinate heme. The chain crosses the membrane as a helical span at residues 270–290; it reads LCAFMLFCCTIIHCVGHYISF. The Extracellular portion of the chain corresponds to 291 to 324; sequence KKINDDVLKIDDGKSVAGDYLNININNFPDEKYL. Residues 325–345 form a helical membrane-spanning segment; it reads FFKSVPGITGHIMLLILILIV. At 346-355 the chain is on the cytoplasmic side; the sequence is SSSMWRIRRP. A helical transmembrane segment spans residues 356-376; that stretch reads MFEIFWYVHHLFIPFYILLCF. Heme-binding residues include H364 and H377. At 377–388 the chain is on the extracellular side; that stretch reads HGYSKILKKDPQ. The chain crosses the membrane as a helical span at residues 389–409; that stretch reads SWMWIIAPFILYSIERLIRIA. The 125-residue stretch at 404 to 528 folds into the FAD-binding FR-type domain; that stretch reads RLIRIARSKK…DGPFGAPAEN (125 aa). Residues 410-698 lie on the Cytoplasmic side of the membrane; it reads RSKKRVILEK…CHLIFHKENF (289 aa). 460-466 serves as a coordination point for FAD; sequence HPFTITS.

Composed of a heavy chain and a light chain. FAD serves as cofactor.

The protein resides in the membrane. Critical component of the membrane-bound oxidase that generates superoxide. It is the terminal component of a respiratory chain that transfers single electrons from cytoplasmic NADPH across the plasma membrane to molecular oxygen on the exterior. This is Superoxide-generating NADPH oxidase heavy chain subunit B (noxB) from Dictyostelium discoideum (Social amoeba).